We begin with the raw amino-acid sequence, 466 residues long: Bifunctional protein GlmU (466 aa).

Residues 1–236 (MEVMPQPLTI…PAEALGINDR (236 aa)) form a pyrophosphorylase region. Residues 13-16 (LAAG), K27, Q79, 84-85 (GT), 107-109 (YGD), G146, E161, N176, and N234 each bind UDP-N-acetyl-alpha-D-glucosamine. Residue D109 participates in Mg(2+) binding. Mg(2+) is bound at residue N234. The interval 237 to 257 (AQLAEVDRIFRDRKRRAVMAA) is linker. The tract at residues 258–466 (GVTLIQPETI…AKKRRKLAKT (209 aa)) is N-acetyltransferase. UDP-N-acetyl-alpha-D-glucosamine-binding residues include R340 and K358. Residue H370 is the Proton acceptor of the active site. Residues Y373 and N384 each contribute to the UDP-N-acetyl-alpha-D-glucosamine site. Residues A387, 393 to 394 (NY), S412, A430, and R447 contribute to the acetyl-CoA site.

This sequence in the N-terminal section; belongs to the N-acetylglucosamine-1-phosphate uridyltransferase family. In the C-terminal section; belongs to the transferase hexapeptide repeat family. In terms of assembly, homotrimer. Mg(2+) is required as a cofactor.

The protein resides in the cytoplasm. The enzyme catalyses alpha-D-glucosamine 1-phosphate + acetyl-CoA = N-acetyl-alpha-D-glucosamine 1-phosphate + CoA + H(+). It carries out the reaction N-acetyl-alpha-D-glucosamine 1-phosphate + UTP + H(+) = UDP-N-acetyl-alpha-D-glucosamine + diphosphate. It participates in nucleotide-sugar biosynthesis; UDP-N-acetyl-alpha-D-glucosamine biosynthesis; N-acetyl-alpha-D-glucosamine 1-phosphate from alpha-D-glucosamine 6-phosphate (route II): step 2/2. The protein operates within nucleotide-sugar biosynthesis; UDP-N-acetyl-alpha-D-glucosamine biosynthesis; UDP-N-acetyl-alpha-D-glucosamine from N-acetyl-alpha-D-glucosamine 1-phosphate: step 1/1. Its pathway is bacterial outer membrane biogenesis; LPS lipid A biosynthesis. In terms of biological role, catalyzes the last two sequential reactions in the de novo biosynthetic pathway for UDP-N-acetylglucosamine (UDP-GlcNAc). The C-terminal domain catalyzes the transfer of acetyl group from acetyl coenzyme A to glucosamine-1-phosphate (GlcN-1-P) to produce N-acetylglucosamine-1-phosphate (GlcNAc-1-P), which is converted into UDP-GlcNAc by the transfer of uridine 5-monophosphate (from uridine 5-triphosphate), a reaction catalyzed by the N-terminal domain. In Solibacter usitatus (strain Ellin6076), this protein is Bifunctional protein GlmU.